Consider the following 543-residue polypeptide: Small conductance calcium-activated potassium channel protein 1 (543 aa).

The segment at 1 to 92 (MNSHSYNGSV…SGKPSNVGHR (92 aa)) is disordered. Residues 65 to 76 (DQDDDEDDEEDE) are compositionally biased toward acidic residues. A helical transmembrane segment spans residues 111–131 (LIFGMFGIVVMVTETELSWGV). The helical transmembrane segment at 140 to 160 (FALKCLISLSTAILLGLVVLY) threads the bilayer. Residues 179-199 (IAMTCERVFLISLELAVCAIH) traverse the membrane as a helical segment. A helical transmembrane segment spans residues 228 to 248 (VLLSIPMFLRLYLLGRVMLLH). The helical transmembrane segment at 277 to 297 (LMTICPGTVLLVFSISSWIIA) threads the bilayer. An intramembrane region (pore-forming) is located at residues 317-337 (FLGAMWLISITFLSIGYGDMV). The helical transmembrane segment at 346 to 366 (VCLLTGIMGAGCTALVVAVVA) threads the bilayer. Positions 384 to 463 (DTQLTKRVKN…LTDLAKTQTV (80 aa)) are calmodulin-binding. The disordered stretch occupies residues 505 to 543 (QAIRPPPPPLPPRPGPGPQDQAARSSPCRWTPVAPSDCG). Over residues 508–521 (RPPPPPLPPRPGPG) the composition is skewed to pro residues.

Belongs to the potassium channel KCNN family. KCa2.1/KCNN1 subfamily. In terms of assembly, homodimer. Heteromultimer with KCNN2 and KCNN3. The complex is composed of 4 channel subunits each of which binds to a calmodulin subunit which regulates the channel activity through calcium-binding. Interacts with calmodulin.

The protein localises to the membrane. It is found in the cytoplasm. Its subcellular location is the myofibril. It localises to the sarcomere. The protein resides in the z line. The catalysed reaction is K(+)(in) = K(+)(out). Its activity is regulated as follows. Inhibited by bee venom neurotoxin apamin. Inhibited by d-tubocurarine and tetraethylammonium (TEA). Its function is as follows. Small conductance calcium-activated potassium channel that mediates the voltage-independent transmembrane transfer of potassium across the cell membrane through a constitutive interaction with calmodulin which binds the intracellular calcium allowing its opening. The current is characterized by a voltage-independent activation, an intracellular calcium concentration increase-dependent activation and a single-channel conductance of about 3 picosiemens. Also presents an inwardly rectifying current, thus reducing its already small outward conductance of potassium ions, which is particularly the case when the membrane potential displays positive values, above + 20 mV. Activation is followed by membrane hyperpolarization. Thought to regulate neuronal excitability by contributing to the slow component of synaptic afterhyperpolarization. In Homo sapiens (Human), this protein is Small conductance calcium-activated potassium channel protein 1.